The following is a 159-amino-acid chain: 2-C-methyl-D-erythritol 2,4-cyclodiphosphate synthase (159 aa).

Residues Asp-10 and His-12 each coordinate a divalent metal cation. 4-CDP-2-C-methyl-D-erythritol 2-phosphate is bound by residues 10–12 (DVH) and 36–37 (HS). Residue His-44 coordinates a divalent metal cation. Residues 58-60 (DIG), 134-137 (TTTE), Phe-141, and Arg-144 contribute to the 4-CDP-2-C-methyl-D-erythritol 2-phosphate site.

It belongs to the IspF family. As to quaternary structure, homotrimer. A divalent metal cation is required as a cofactor.

The enzyme catalyses 4-CDP-2-C-methyl-D-erythritol 2-phosphate = 2-C-methyl-D-erythritol 2,4-cyclic diphosphate + CMP. It functions in the pathway isoprenoid biosynthesis; isopentenyl diphosphate biosynthesis via DXP pathway; isopentenyl diphosphate from 1-deoxy-D-xylulose 5-phosphate: step 4/6. In terms of biological role, involved in the biosynthesis of isopentenyl diphosphate (IPP) and dimethylallyl diphosphate (DMAPP), two major building blocks of isoprenoid compounds. Catalyzes the conversion of 4-diphosphocytidyl-2-C-methyl-D-erythritol 2-phosphate (CDP-ME2P) to 2-C-methyl-D-erythritol 2,4-cyclodiphosphate (ME-CPP) with a corresponding release of cytidine 5-monophosphate (CMP). In Bacteroides thetaiotaomicron (strain ATCC 29148 / DSM 2079 / JCM 5827 / CCUG 10774 / NCTC 10582 / VPI-5482 / E50), this protein is 2-C-methyl-D-erythritol 2,4-cyclodiphosphate synthase.